The chain runs to 178 residues: CASP-like protein 2U3 (178 aa).

The Cytoplasmic portion of the chain corresponds to 1-4 (MACR). Residues 5–25 (VMEVLLRVLAILLSIAGALVM) traverse the membrane as a helical segment. Residues 26-52 (AKDKQDTFVMLGTVPVPLYARHSYVEA) lie on the Extracellular side of the membrane. A helical transmembrane segment spans residues 53 to 73 (FVFLVYANGIVAIYCFIAVLL). The Cytoplasmic portion of the chain corresponds to 74 to 80 (SLLAKSR). A helical membrane pass occupies residues 81–101 (VLAGLLFFMDQALAYLLLAAA). Over 102–132 (AASTEVAYIAKRGEKKLVWGEVCSNFEHFCN) the chain is Extracellular. A helical transmembrane segment spans residues 133 to 153 (LVGVSLVLTFLSVLVLVTLAI). Over 154–178 (LSGKRLFGHPPLCAPPSTPPVHQGV) the chain is Cytoplasmic.

It belongs to the Casparian strip membrane proteins (CASP) family. As to quaternary structure, homodimer and heterodimers.

It is found in the cell membrane. The protein is CASP-like protein 2U3 of Pteridium aquilinum subsp. aquilinum (Bracken fern).